Consider the following 241-residue polypeptide: Phosphoribosylaminoimidazole-succinocarboxamide synthase (241 aa).

It belongs to the SAICAR synthetase family.

The enzyme catalyses 5-amino-1-(5-phospho-D-ribosyl)imidazole-4-carboxylate + L-aspartate + ATP = (2S)-2-[5-amino-1-(5-phospho-beta-D-ribosyl)imidazole-4-carboxamido]succinate + ADP + phosphate + 2 H(+). The protein operates within purine metabolism; IMP biosynthesis via de novo pathway; 5-amino-1-(5-phospho-D-ribosyl)imidazole-4-carboxamide from 5-amino-1-(5-phospho-D-ribosyl)imidazole-4-carboxylate: step 1/2. The chain is Phosphoribosylaminoimidazole-succinocarboxamide synthase from Lacticaseibacillus paracasei (strain ATCC 334 / BCRC 17002 / CCUG 31169 / CIP 107868 / KCTC 3260 / NRRL B-441) (Lactobacillus paracasei).